Consider the following 196-residue polypeptide: Small ribosomal subunit protein uS4c (196 aa).

A disordered region spans residues 17-36 (ALPGLTRKTPKSGSNLKKKF). Residues 89-150 (MRLDNIVFRL…NQRSKRLVQN (62 aa)) enclose the S4 RNA-binding domain.

The protein belongs to the universal ribosomal protein uS4 family. Part of the 30S ribosomal subunit. Contacts protein S5. The interaction surface between S4 and S5 is involved in control of translational fidelity.

It is found in the plastid. Its subcellular location is the chloroplast. In terms of biological role, one of the primary rRNA binding proteins, it binds directly to 16S rRNA where it nucleates assembly of the body of the 30S subunit. Its function is as follows. With S5 and S12 plays an important role in translational accuracy. The polypeptide is Small ribosomal subunit protein uS4c (rps4) (Tragus racemosus (Carrot grass)).